A 360-amino-acid chain; its full sequence is Terpene synthase 5 (360 aa).

The DDxx(x)D/E motif motif lies at 87-92; the sequence is DDFLER. Positions 237 to 245 match the NDxxSxxxD/E motif motif; it reads NDCVSYAKE.

Belongs to the terpene synthase family.

Functionally, terpene synthase that converts its substrate farnesyl diphosphate (FPP) into 2 yet unidentified sesquiterpenes. This chain is Terpene synthase 5, found in Dictyostelium purpureum (Slime mold).